We begin with the raw amino-acid sequence, 273 residues long: CUE domain-containing protein 2-A (273 aa).

The segment at 92-121 is disordered; sequence GKENVSPKPTAEVSFMTPTSSSTESSKKIE. Residues 135–178 form the CUE domain; that stretch reads DAKNGIDLLLEIFPSCTVSQAQTALSMAKGDLEDAVQIIVDGKV.

This sequence belongs to the CUEDC2 family. In terms of processing, phosphorylated.

Its subcellular location is the cytoplasm. It is found in the nucleus. Functionally, may play a role in targeting proteins for ubiquitination and subsequent proteasomal degradation. This is CUE domain-containing protein 2-A (cuedc2-a) from Xenopus laevis (African clawed frog).